The primary structure comprises 357 residues: Glycerol-3-phosphate dehydrogenase [NAD(P)+] (357 aa).

NADPH-binding residues include Ser-30, Phe-31, Arg-51, and Lys-124. 2 residues coordinate sn-glycerol 3-phosphate: Lys-124 and Gly-152. An NADPH-binding site is contributed by Ala-156. Sn-glycerol 3-phosphate is bound by residues Lys-207, Asp-260, Ser-270, Arg-271, and Asn-272. Lys-207 acts as the Proton acceptor in catalysis. NADPH is bound at residue Arg-271. Glu-297 lines the NADPH pocket.

The protein belongs to the NAD-dependent glycerol-3-phosphate dehydrogenase family.

It localises to the cytoplasm. It carries out the reaction sn-glycerol 3-phosphate + NAD(+) = dihydroxyacetone phosphate + NADH + H(+). It catalyses the reaction sn-glycerol 3-phosphate + NADP(+) = dihydroxyacetone phosphate + NADPH + H(+). The protein operates within membrane lipid metabolism; glycerophospholipid metabolism. Functionally, catalyzes the reduction of the glycolytic intermediate dihydroxyacetone phosphate (DHAP) to sn-glycerol 3-phosphate (G3P), the key precursor for phospholipid synthesis. The sequence is that of Glycerol-3-phosphate dehydrogenase [NAD(P)+] from Acinetobacter baumannii (strain SDF).